The chain runs to 129 residues: Putative transmembrane protein 10 (129 aa).

A run of 3 helical transmembrane segments spans residues 3 to 23, 27 to 47, and 85 to 105; these read NFSY…AFAG, LLVG…LSSL, and SSVL…FFVF.

Its subcellular location is the host membrane. The sequence is that of Putative transmembrane protein 10 (SIFV0010) from Sulfolobus islandicus filamentous virus (isolate Iceland/Hveragerdi) (SIFV).